A 296-amino-acid polypeptide reads, in one-letter code: Small ribosomal subunit protein uS2 (296 aa).

The interval 246 to 272 is disordered; that stretch reads QAKDGSVVDSGKGKSIAAHKGGGKASK.

Belongs to the universal ribosomal protein uS2 family.

The polypeptide is Small ribosomal subunit protein uS2 (Anaplasma phagocytophilum (strain HZ)).